The chain runs to 139 residues: Putative esterase PM0788 (139 aa).

Belongs to the thioesterase PaaI family.

In Pasteurella multocida (strain Pm70), this protein is Putative esterase PM0788.